Reading from the N-terminus, the 228-residue chain is Thymidylate kinase (228 aa).

20-27 provides a ligand contact to ATP; sequence GGEGSGKS.

The protein belongs to the thymidylate kinase family.

The catalysed reaction is dTMP + ATP = dTDP + ADP. Functionally, phosphorylation of dTMP to form dTDP in both de novo and salvage pathways of dTTP synthesis. The sequence is that of Thymidylate kinase from Afipia carboxidovorans (strain ATCC 49405 / DSM 1227 / KCTC 32145 / OM5) (Oligotropha carboxidovorans).